Reading from the N-terminus, the 79-residue chain is uncharacterized protein (79 aa).

A signal peptide spans 1–24 (MKMNPCTVILCKSLFFFCLFQVDC). Residue N33 is glycosylated (N-linked (GlcNAc...) asparagine).

Its subcellular location is the secreted. This is an uncharacterized protein from Saccharomyces cerevisiae (strain ATCC 204508 / S288c) (Baker's yeast).